Consider the following 517-residue polypeptide: Putative thymidine phosphorylase (517 aa).

The protein belongs to the thymidine/pyrimidine-nucleoside phosphorylase family. Type 2 subfamily.

The enzyme catalyses thymidine + phosphate = 2-deoxy-alpha-D-ribose 1-phosphate + thymine. This chain is Putative thymidine phosphorylase, found in Legionella pneumophila (strain Corby).